We begin with the raw amino-acid sequence, 146 residues long: Catabolic 3-dehydroquinase (146 aa).

Tyr-24 (proton acceptor) is an active-site residue. Substrate is bound by residues Asn-78, His-84, and Asp-91. His-104 serves as the catalytic Proton donor. Residues 105–106 and Arg-115 each bind substrate; that span reads IT.

Belongs to the type-II 3-dehydroquinase family. In terms of assembly, homododecamer. Adopts a ring-like structure, composed of an arrangement of two hexameric rings stacked on top of one another.

The enzyme catalyses 3-dehydroquinate = 3-dehydroshikimate + H2O. Its pathway is aromatic compound metabolism; 3,4-dihydroxybenzoate biosynthesis; 3,4-dihydroxybenzoate from 3-dehydroquinate: step 1/2. Is involved in the catabolism of quinate. Allows the utilization of quinate as carbon source via the beta-ketoadipate pathway. The sequence is that of Catabolic 3-dehydroquinase from Candida albicans (strain SC5314 / ATCC MYA-2876) (Yeast).